We begin with the raw amino-acid sequence, 353 residues long: Phospho-N-acetylmuramoyl-pentapeptide-transferase (353 aa).

10 helical membrane passes run 22–42 (FAFF…ITWA), 65–85 (TPTM…LFCI), 88–108 (DNIF…IGLI), 129–149 (LLAQ…SSEL), 161–181 (PLFD…ISSS), 192–212 (GLAT…LYLS), 228–248 (GLGE…GFLW), 256–276 (VFMG…LAVI), 281–301 (ILLL…ILQV), and 330–350 (KIIV…LASI).

It belongs to the glycosyltransferase 4 family. MraY subfamily. It depends on Mg(2+) as a cofactor.

The protein resides in the cell inner membrane. It carries out the reaction UDP-N-acetyl-alpha-D-muramoyl-L-alanyl-gamma-D-glutamyl-meso-2,6-diaminopimeloyl-D-alanyl-D-alanine + di-trans,octa-cis-undecaprenyl phosphate = di-trans,octa-cis-undecaprenyl diphospho-N-acetyl-alpha-D-muramoyl-L-alanyl-D-glutamyl-meso-2,6-diaminopimeloyl-D-alanyl-D-alanine + UMP. It functions in the pathway cell wall biogenesis; peptidoglycan biosynthesis. Its function is as follows. Catalyzes the initial step of the lipid cycle reactions in the biosynthesis of the cell wall peptidoglycan: transfers peptidoglycan precursor phospho-MurNAc-pentapeptide from UDP-MurNAc-pentapeptide onto the lipid carrier undecaprenyl phosphate, yielding undecaprenyl-pyrophosphoryl-MurNAc-pentapeptide, known as lipid I. The chain is Phospho-N-acetylmuramoyl-pentapeptide-transferase from Campylobacter jejuni subsp. jejuni serotype O:2 (strain ATCC 700819 / NCTC 11168).